A 102-amino-acid polypeptide reads, in one-letter code: Co-chaperonin GroES (102 aa).

Belongs to the GroES chaperonin family. Heptamer of 7 subunits arranged in a ring. Interacts with the chaperonin GroEL.

It localises to the cytoplasm. Together with the chaperonin GroEL, plays an essential role in assisting protein folding. The GroEL-GroES system forms a nano-cage that allows encapsulation of the non-native substrate proteins and provides a physical environment optimized to promote and accelerate protein folding. GroES binds to the apical surface of the GroEL ring, thereby capping the opening of the GroEL channel. This is Co-chaperonin GroES from Chlamydia trachomatis serovar L2 (strain ATCC VR-902B / DSM 19102 / 434/Bu).